A 316-amino-acid polypeptide reads, in one-letter code: DnaJ homolog subfamily B member 13 (316 aa).

Positions D4–G68 constitute a J domain.

Homodimer. Component of the axonemal radial spoke complex 1 (RS1), at least composed of spoke head proteins RSPH1, RSPH3, RSPH9 and the cilia-specific component RSPH4A or sperm-specific component RSPH6A, spoke stalk proteins RSPH14, DNAJB13, DYDC1, ROPN1L and NME5, and the anchor protein IQUB. Interacts with SUN5. Interacts with IQUB. In terms of tissue distribution, specifically expressed in testis and trachea.

It localises to the cell projection. Its subcellular location is the cilium. The protein localises to the flagellum. In terms of biological role, functions as part of axonemal radial spoke complexes that play an important part in the motility of sperm and cilia. The polypeptide is DnaJ homolog subfamily B member 13 (DNAJB13) (Homo sapiens (Human)).